Here is a 251-residue protein sequence, read N- to C-terminus: Phosphate import ATP-binding protein PstB 2 (251 aa).

The ABC transporter domain maps to 5-246 (ISAKDVHLSY…PKKQITSDYL (242 aa)). 37–44 (GPSGCGKS) contributes to the ATP binding site.

This sequence belongs to the ABC transporter superfamily. Phosphate importer (TC 3.A.1.7) family. As to quaternary structure, the complex is composed of two ATP-binding proteins (PstB), two transmembrane proteins (PstC and PstA) and a solute-binding protein (PstS).

The protein resides in the cell membrane. The enzyme catalyses phosphate(out) + ATP + H2O = ADP + 2 phosphate(in) + H(+). Functionally, part of the ABC transporter complex PstSACB involved in phosphate import. Responsible for energy coupling to the transport system. The chain is Phosphate import ATP-binding protein PstB 2 from Lactobacillus acidophilus (strain ATCC 700396 / NCK56 / N2 / NCFM).